Consider the following 35-residue polypeptide: Photosystem II reaction center protein T (35 aa).

A helical transmembrane segment spans residues 3 to 23; that stretch reads ALVYTFLLVSTLGIIFFAIFF.

This sequence belongs to the PsbT family. In terms of assembly, PSII is composed of 1 copy each of membrane proteins PsbA, PsbB, PsbC, PsbD, PsbE, PsbF, PsbH, PsbI, PsbJ, PsbK, PsbL, PsbM, PsbT, PsbY, PsbZ, Psb30/Ycf12, at least 3 peripheral proteins of the oxygen-evolving complex and a large number of cofactors. It forms dimeric complexes.

The protein resides in the plastid. The protein localises to the chloroplast thylakoid membrane. Found at the monomer-monomer interface of the photosystem II (PS II) dimer, plays a role in assembly and dimerization of PSII. PSII is a light-driven water plastoquinone oxidoreductase, using light energy to abstract electrons from H(2)O, generating a proton gradient subsequently used for ATP formation. The chain is Photosystem II reaction center protein T from Stewartia pseudocamellia (Japanese stewartia).